Reading from the N-terminus, the 210-residue chain is Proteasome subunit beta (210 aa).

A propeptide spans 1-9 (MNDKNTLKG) (removed in mature form; by autocatalysis). T10 functions as the Nucleophile in the catalytic mechanism.

Belongs to the peptidase T1B family. In terms of assembly, the 20S proteasome core is composed of 14 alpha and 14 beta subunits that assemble into four stacked heptameric rings, resulting in a barrel-shaped structure. The two inner rings, each composed of seven catalytic beta subunits, are sandwiched by two outer rings, each composed of seven alpha subunits. The catalytic chamber with the active sites is on the inside of the barrel. Has a gated structure, the ends of the cylinder being occluded by the N-termini of the alpha-subunits. Is capped at one or both ends by the proteasome regulatory ATPase, PAN.

It localises to the cytoplasm. The catalysed reaction is Cleavage of peptide bonds with very broad specificity.. The formation of the proteasomal ATPase PAN-20S proteasome complex, via the docking of the C-termini of PAN into the intersubunit pockets in the alpha-rings, triggers opening of the gate for substrate entry. Interconversion between the open-gate and close-gate conformations leads to a dynamic regulation of the 20S proteasome proteolysis activity. Functionally, component of the proteasome core, a large protease complex with broad specificity involved in protein degradation. This is Proteasome subunit beta from Methanothermobacter thermautotrophicus (strain ATCC 29096 / DSM 1053 / JCM 10044 / NBRC 100330 / Delta H) (Methanobacterium thermoautotrophicum).